The primary structure comprises 309 residues: 2-dehydropantoate 2-reductase (309 aa).

Residues 7–12 (GAGSIG), R31, and K74 each bind NADP(+). CoA-binding positions include 8–10 (AGS), R31, K74, and C84. Positions 100 and 124 each coordinate NADP(+). Catalysis depends on K180, which acts as the Proton donor. Substrate-binding positions include K180, N184, N188, N198, and 247-250 (NYNS). R257 lines the CoA pocket. Position 262 (E262) interacts with NADP(+).

It belongs to the ketopantoate reductase family. Homodimer.

It localises to the cytoplasm. It carries out the reaction (R)-pantoate + NAD(+) = 2-dehydropantoate + NADH + H(+). The enzyme catalyses (R)-pantoate + NADP(+) = 2-dehydropantoate + NADPH + H(+). The protein operates within cofactor biosynthesis; coenzyme A biosynthesis. With respect to regulation, regulated by feedback inhibition by coenzyme A (CoA). CoA acts by competing with NAD(P)H. A disulfide bond is formed between CoA and Cys-84, which indicates an irreversible inhibition upon binding of CoA. In terms of biological role, catalyzes the NAD(P)H-dependent reduction of ketopantoate into pantoic acid. Prefers NADH rather than NADPH as the electron donor. The protein is 2-dehydropantoate 2-reductase of Thermococcus kodakarensis (strain ATCC BAA-918 / JCM 12380 / KOD1) (Pyrococcus kodakaraensis (strain KOD1)).